A 2883-amino-acid chain; its full sequence is Desmoplakin (2883 aa).

The interval 1 to 21 is disordered; the sequence is MSCNGGSHPRINTLGRMTRAE. Positions 1 to 596 are interaction with PKP1, JUP, PKP2; the sequence is MSCNGGSHPR…DYMKTIEDLE (596 aa). The segment at 1 to 1068 is globular 1; it reads MSCNGGSHPR…ANSENCNKNK (1068 aa). Ser22 is modified (phosphoserine). Thr59 is modified (phosphothreonine). A Phosphoserine modification is found at Ser65. Tyr68 bears the Phosphotyrosine mark. Thr73 is modified (phosphothreonine). Phosphoserine is present on residues Ser177, Ser178, and Ser188. Spectrin repeat units lie at residues 190–283 and 284–387; these read SGWD…HLRQ and LQNI…LKEN. The Spectrin 3a repeat unit spans residues 388-458; that stretch reads AAYFQFFEEA…NLVNKSKKIV (71 aa). Residues 470–527 enclose the SH3 domain; sequence NKPIILRALCDYKQDQKIVHKGDECILKDNNERSKWYVTGPGGVDMLVPSVGLIIPPP. One copy of the Spectrin 3b repeat lies at 528–557; the sequence is NPLAVDLSCKIEQYYEAILALWNQLYINMK. Spectrin repeat units lie at residues 558–639, 666–781, and 782–895; these read SLVS…IQLP, VIET…SLCS, and VRAL…DLEK. Residues 1034 to 1956 are a coiled coil; the sequence is KSLEDLKLKN…LQKEIEKLRQ (923 aa). The tract at residues 1069 to 1957 is central fibrous rod domain; it reads FLDQNLQKYQ…QKEIEKLRQR (889 aa). 3 positions are modified to phosphoserine: Ser1670, Ser1720, and Ser2036. Residues 1958-2882 form a globular 2 region; that stretch reads PYGSHRETQT…YSFSSSSIGG (925 aa). The interval 1972 to 2220 is 4.5 X 38 AA tandem repeats (Domain A); it reads TVDSSKLVFD…LLLSVQKRSM (249 aa). Plectin repeat units lie at residues 2021-2057, 2058-2095, 2096-2133, 2134-2171, 2175-2209, 2210-2245, 2263-2300, 2301-2338, 2339-2376, 2377-2414, 2418-2452, 2468-2505, 2519-2556, 2622-2659, 2660-2697, 2736-2773, and 2774-2811; these read QPFL…PEST, VMLL…FDDR, QQIY…RETG, MRLL…RDLY, NDPR…PHTG, LLLL…PSTV, KDFL…PGTA, LELL…IEFK, EKLL…KGHG, IRLL…EELS, SDPS…EETG, SQKN…YDTF, TITG…RKFF, SDPL…SITG, QRLL…QDMA, QRFL…GRAA, and QRLQ…DITG. Residues Ser2219, Ser2221, and Ser2237 each carry the phosphoserine modification. A 4.5 X 38 AA tandem repeats (Domain B) region spans residues 2256 to 2458; sequence DEVGERIKDF…EETGLCLLPL (203 aa). Gln2492 carries the Omega-hydroxyceramide glutamate ester lipid modification. The tract at residues 2621-2833 is 4.5 X 38 AA tandem repeats (Domain C); that stretch reads LSDPLEESSP…GLPSPYNMSA (213 aa). Ser2822 and Ser2827 each carry phosphoserine. The interval 2822–2883 is disordered; sequence SKGLPSPYNM…SFSSSSIGGY (62 aa). At Tyr2829 the chain carries Phosphotyrosine. 2 positions are modified to phosphoserine: Ser2832 and Ser2836. Positions 2835-2858 are 6 X 4 AA tandem repeats of G-S-R-[SR]; it reads GSRSGSRSGSRSGSRSGSRSGSRR. The span at 2835 to 2858 shows a compositional bias: low complexity; it reads GSRSGSRSGSRSGSRSGSRSGSRR. Omega-N-methylarginine occurs at positions 2837 and 2858. A Phosphoserine modification is found at Ser2860. Thr2864 carries the post-translational modification Phosphothreonine. Positions 2867–2883 are enriched in low complexity; sequence SSYSYSYSFSSSSIGGY. Ser2879 is modified (phosphoserine).

This sequence belongs to the plakin or cytolinker family. Homodimer. Interacts with COL17A1 (via cytoplasmic region). Interacts with DSC2. Interacts with PKP1. Interacts with PKP2. Interacts weakly with TMEM65. Post-translationally, phosphorylation at Ser-2860 increases association with intermediate filament cytokeratin, potentially facilitating interaction between desmosome junctions and intermediate filament architecture. In terms of tissue distribution, expressed in undifferentiated keratinocytes of the epidermis at birth, expression increases as differentiation proceeds (at protein level). Abundantly expressed in the suprabasal layers and weakly in the basal layers of the outer hair root sheath (at protein level). Expressed at intercalated disks in cardiomyocytes (at protein level).

Its subcellular location is the cell junction. The protein resides in the desmosome. The protein localises to the cell membrane. It is found in the cytoplasm. Its function is as follows. Major high molecular weight protein of desmosomes. Regulates profibrotic gene expression in cardiomyocytes via activation of the MAPK14/p38 MAPK signaling cascade and increase in TGFB1 protein abundance. The polypeptide is Desmoplakin (Mus musculus (Mouse)).